A 252-amino-acid polypeptide reads, in one-letter code: Small ribosomal subunit protein uS3 (252 aa).

The KH type-2 domain occupies 39-110 (IRKALMKELK…EVKINVVEIK (72 aa)). The interval 218-252 (TSDEKPKFEKRDFNRSNNNRRDQAPKSHPVAKEAK) is disordered. Residues 219–252 (SDEKPKFEKRDFNRSNNNRRDQAPKSHPVAKEAK) show a composition bias toward basic and acidic residues.

Belongs to the universal ribosomal protein uS3 family. Part of the 30S ribosomal subunit. Forms a tight complex with proteins S10 and S14.

In terms of biological role, binds the lower part of the 30S subunit head. Binds mRNA in the 70S ribosome, positioning it for translation. The protein is Small ribosomal subunit protein uS3 of Spiroplasma citri.